Reading from the N-terminus, the 214-residue chain is N-(5'-phosphoribosyl)anthranilate isomerase (214 aa).

It belongs to the TrpF family.

The enzyme catalyses N-(5-phospho-beta-D-ribosyl)anthranilate = 1-(2-carboxyphenylamino)-1-deoxy-D-ribulose 5-phosphate. It participates in amino-acid biosynthesis; L-tryptophan biosynthesis; L-tryptophan from chorismate: step 3/5. The chain is N-(5'-phosphoribosyl)anthranilate isomerase from Halorubrum lacusprofundi (strain ATCC 49239 / DSM 5036 / JCM 8891 / ACAM 34).